The following is a 2150-amino-acid chain: MGAQVSRQNVGTHSTQNSVSNGSSLNYFNINYFKDAASNGASKLEFTQDPSKFTDPVKDVLEKGIPTLQSPTVEACGYSDRIIQITRGDSTITSQDVANAIVAYGVWPHYLSSKDASAIDKPSQPDTSSNRFYTLRSVTWSSSSKGWWWKLPDALKDMGIFGENMFYHYLGRSGYTIHVQCNASKFHQGTLIVALIPEHQIASALHGNVNVGYNYTHPGETGREVKAETRLNPDLQPTEEYWLNFDGTLLGNITIFPHQFINLRSNNSATIIAPYVNAVPMDSMRSHNNWSLVIIPICPLETSSAINTIPITISISPMCAEFSGARAKRQGLPVFITPGSGQFLTTDDFQSPCALPWYHPTKEISIPGEVKNLVEICQVDSLVPINNTDTYINSENMYSVVLQSSINAPDKIFSIRTDVASQPLATTLIGEISSYFTHWTGSLRFSFMFCGTANTTVKLLLAYTPPGIAEPTTRKDAMLGTHVIWDVGLQSTISMVVPWISASHYRNTSPGRSTSGYITCWYQTRLVIPPQTPPTARLLCFVSGCKDFCLRMARDTNLHLQSGAIAQNPVENYIDEVLNEVLVVPNINSSNPTTSNSAPALDAAETGHTSSVQPEDVIETRYVQTSQTRDEMSLESFLGRSGCIHESKLEVTLANYNKENFTVWAINLQEMAQIRRKFELFTYTRFDSEITLVPCISALSQDIGHITMQYMYVPPGAPVPNSRDDYAWQSGTNASVFWQHGQAYPRFSLPFLSVASAYYMFYDGYDEQDQNYGTANTNNMGSLCSRIVTEKHIHKVHIMTRIYHKAKHVKAWCPRPPRALEYTRAHRTNFKIEDRSIQTAIVTRPIITTAGPSDMYVHVGNLIYRNLHLFNSEMHESILVSYSSDLIIYRTNTVGDDYIPSCDCTQATYYCKHKNRYFPITVTSHDWYEIQESEYYPKHIQYNLLIGEGPCEPGDCGGKLLCKHGVIGIVTAGGDNHVAFIDLRHFHCAEEQGVTDYIHMLGEAFGNGFVDSVKEHIHAINPVGNISKKIIKWMLRIISAMVIIIRNSSDPQTILATLTLIGCSGSPWRFLKEKFCKWTQLNYIHKESDSWLKKFTEACNAARGLEWIGNKISKFIEWMKSMLPQAQLKVKYLNELKKLNLYEKQVESLRVADMKTQEKIKMEIDTLHDLSRKFLPLYASEAKRIKTLYIKCDNIIKQKKRCEPVAIVIHGPPGAGKSITTNFLAKMITNDSDIYSLPPDPKYFDGYDQQSVVIMDDIMQNPAGDDMTLFCQMVSSVTFIPPMADLPDKGKAFDSRFVLCSTNHSLLTPPTITSLPAMNRRFFLDLDIIVHDNFKDPQGKLNVAAAFRPCDVDNRIGNARCCPFVCGKAVSFKDRNSCNKYSLAQVYNIMIEEDRRRRQVVDVMTAIFQGPIDMKNPPPPAITDLLQSVRTPEVIKYCEGNRWIIPAECKIEKELNLANTIITIIANVIGMARIIYVIYKLFCTLQGPYSGEPKPKTKIPERRVVTQGPEEEFGMSLIKHNSCVITTENGKFTGLGVYDRFVVVPTHADPGKEIQVDGITTKVIDSYDLYNKNGIKLEITVLKLDRNEKFRDIRRYIPNNEDDYPNCNLALLANQPEPTIINVGDVVSYGNILLSGNQTARMLKYSYPTKSGYCGGVLYKIGQVLGIHVGGNGRDGFSAMLLRSYFTDVQGQITLSKKTSECNLPSIHTPCKTKLQPSVFYDVFPGSKEPAVLSEKDARLQVDFNEALFSKYKGNTDCSINDHIRIASSHYAAQLITLDIDPKPITLEDSVFGTDGLEALDLNTSAGFPYIAMGVKKRDLINNKTKDISKLKEAIDKYGVDLPMVTFLKDELRKHEKVIKGKTRVIEASSVNDTLLFRTTFGNLFSKFHLNPGIVTGSAVGCDPEVFWSKIPAMLDDKCIMAFDYTNYDGSIHPIWFEALKQVLVDLSFNPTLIDRLCKSKHIFKNTYYEVEGGVPSGCSGTSIFNTMINNIIIRTLVLDAYKNIDLDKLKIIAYGDDVIFSYIHELDMEAIAIEGVKYGLTITPADKSNTFVKLDYSNVTFLKRGFKQDEKYNFLIHPTFPEDEIFESIRWTKKPSQMHEHVLSLCHLMWHNGRDAYKKFVEKIRSVSAGRALYIPPYDLLLHEWYEKF.

A lipid anchor (N-myristoyl glycine; by host) is attached at glycine 2. At 2-1463 the chain is on the cytoplasmic side; that stretch reads GAQVSRQNVG…ELNLANTIIT (1462 aa). An amphipathic alpha-helix region spans residues 565–581; the sequence is IAQNPVENYIDEVLNEV. The interval 592–611 is disordered; that stretch reads PTTSNSAPALDAAETGHTSS. Active-site for protease 2A activity residues include histidine 868 and aspartate 885. Zn(2+) is bound by residues cysteine 902 and cysteine 904. Cysteine 956 (for protease 2A activity) is an active-site residue. Zn(2+)-binding residues include cysteine 962 and histidine 964. A membrane-binding region spans residues 1088 to 1157; the sequence is SDSWLKKFTE…SLRVADMKTQ (70 aa). The tract at residues 1088–1221 is oligomerization; that stretch reads SDSWLKKFTE…PPGAGKSITT (134 aa). The tract at residues 1109-1113 is RNA-binding; sequence GNKIS. One can recognise an SF3 helicase domain in the interval 1181-1343; that stretch reads EAKRIKTLYI…FKDPQGKLNV (163 aa). Zn(2+)-binding residues include cysteine 1350, cysteine 1361, and cysteine 1366. A C4-type; degenerate zinc finger spans residues 1350–1366; sequence CDVDNRIGNARCCPFVC. The tract at residues 1393 to 1400 is RNA-binding; sequence EDRRRRQV. The oligomerization stretch occupies residues 1404 to 1409; sequence MTAIFQ. Residues 1464 to 1479 lie within the membrane without spanning it; that stretch reads IIANVIGMARIIYVIY. Topologically, residues 1480-2150 are cytoplasmic; it reads KLFCTLQGPY…LLLHEWYEKF (671 aa). Tyrosine 1489 is subject to O-(5'-phospho-RNA)-tyrosine. A Peptidase C3 domain is found at 1508-1686; that stretch reads GPEEEFGMSL…FSAMLLRSYF (179 aa). Catalysis depends on for protease 3C activity residues histidine 1547, glutamate 1578, and cysteine 1654. A RdRp catalytic domain is found at 1918 to 2031; it reads KCIMAFDYTN…SYIHELDMEA (114 aa). 2 residues coordinate Mg(2+): aspartate 1924 and aspartate 2017.

The protein belongs to the picornaviruses polyprotein family. In terms of assembly, interacts with capsid protein VP1 and capsid protein VP3 to form heterotrimeric protomers. Interacts with capsid protein VP0, and capsid protein VP3 to form heterotrimeric protomers. Five protomers subsequently associate to form pentamers which serve as building blocks for the capsid. Interacts with capsid protein VP2, capsid protein VP3 and capsid protein VP4 following cleavage of capsid protein VP0. As to quaternary structure, interacts with capsid protein VP1 and capsid protein VP3 in the mature capsid. In terms of assembly, interacts with capsid protein VP0 and capsid protein VP1 to form heterotrimeric protomers. Five protomers subsequently associate to form pentamers which serve as building blocks for the capsid. Interacts with capsid protein VP4 in the mature capsid. Interacts with protein 2C; this interaction may be important for virion morphogenesis. Interacts with capsid protein VP1 and capsid protein VP3. As to quaternary structure, homodimer. In terms of assembly, homohexamer; forms a hexameric ring structure with 6-fold symmetry characteristic of AAA+ ATPases. Interacts (via N-terminus) with host RTN3 (via reticulon domain); this interaction is important for viral replication. Interacts with capsid protein VP3; this interaction may be important for virion morphogenesis. Interacts with protein 3CD. As to quaternary structure, homodimer. Interacts with host GBF1. Interacts (via GOLD domain) with host ACBD3 (via GOLD domain); this interaction allows the formation of a viral protein 3A/ACBD3 heterotetramer with a 2:2 stoichiometry, which will stimulate the recruitment of host PI4KB in order to synthesize PI4P at the viral RNA replication sites. In terms of assembly, interacts with RNA-directed RNA polymerase. Interacts with protein 3AB and with RNA-directed RNA polymerase. As to quaternary structure, interacts with Viral protein genome-linked and with protein 3CD. Requires Mg(2+) as cofactor. Specific enzymatic cleavages in vivo by the viral proteases yield processing intermediates and the mature proteins. Post-translationally, myristoylation is required for the formation of pentamers during virus assembly. Further assembly of 12 pentamers and a molecule of genomic RNA generates the provirion. In terms of processing, during virion maturation, immature virions are rendered infectious following cleavage of VP0 into VP4 and VP2. This maturation seems to be an autocatalytic event triggered by the presence of RNA in the capsid and it is followed by a conformational change infectious virion. Myristoylation is required during RNA encapsidation and formation of the mature virus particle. Post-translationally, VPg is uridylylated by the polymerase into VPg-pUpU. This acts as a nucleotide-peptide primer for the genomic RNA replication.

Its subcellular location is the virion. It is found in the host cytoplasm. The protein localises to the host cytoplasmic vesicle membrane. The protein resides in the host nucleus. The catalysed reaction is a ribonucleoside 5'-triphosphate + H2O = a ribonucleoside 5'-diphosphate + phosphate + H(+). The enzyme catalyses Selective cleavage of Tyr-|-Gly bond in the picornavirus polyprotein.. It catalyses the reaction RNA(n) + a ribonucleoside 5'-triphosphate = RNA(n+1) + diphosphate. It carries out the reaction Selective cleavage of Gln-|-Gly bond in the poliovirus polyprotein. In other picornavirus reactions Glu may be substituted for Gln, and Ser or Thr for Gly.. With respect to regulation, replication or transcription is subject to high level of random mutations by the nucleotide analog ribavirin. Forms an icosahedral capsid of pseudo T=3 symmetry with capsid proteins VP2 and VP3. The capsid is 300 Angstroms in diameter, composed of 60 copies of each capsid protein and enclosing the viral positive strand RNA genome. Capsid protein VP1 mainly forms the vertices of the capsid. Capsid protein VP1 interacts with host cell receptor to provide virion attachment to target host cells. This attachment induces virion internalization. Tyrosine kinases are probably involved in the entry process. After binding to its receptor, the capsid undergoes conformational changes. Capsid protein VP1 N-terminus (that contains an amphipathic alpha-helix) and capsid protein VP4 are externalized. Together, they shape a pore in the host membrane through which viral genome is translocated to host cell cytoplasm. Functionally, forms an icosahedral capsid of pseudo T=3 symmetry with capsid proteins VP2 and VP3. The capsid is 300 Angstroms in diameter, composed of 60 copies of each capsid protein and enclosing the viral positive strand RNA genome. In terms of biological role, lies on the inner surface of the capsid shell. After binding to the host receptor, the capsid undergoes conformational changes. Capsid protein VP4 is released, Capsid protein VP1 N-terminus is externalized, and together, they shape a pore in the host membrane through which the viral genome is translocated into the host cell cytoplasm. Its function is as follows. Component of immature procapsids, which is cleaved into capsid proteins VP4 and VP2 after maturation. Allows the capsid to remain inactive before the maturation step. Cysteine protease that cleaves viral polyprotein and specific host proteins. It is responsible for the autocatalytic cleavage between the P1 and P2 regions, which is the first cleavage occurring in the polyprotein. Also cleaves the host translation initiation factor EIF4G1, in order to shut down the capped cellular mRNA translation. Inhibits the host nucleus-cytoplasm protein and RNA trafficking by cleaving host members of the nuclear pores. Counteracts stress granule formation probably by antagonizing its assembly or promoting its dissassembly. Functionally, plays an essential role in the virus replication cycle by acting as a viroporin. Creates a pore in the host endoplasmic reticulum and as a consequence releases Ca2+ in the cytoplasm of infected cell. In turn, high levels of cytoplasmic calcium may trigger membrane trafficking and transport of viral ER-associated proteins to viroplasms, sites of viral genome replication. In terms of biological role, induces and associates with structural rearrangements of intracellular membranes. Displays RNA-binding, nucleotide binding and NTPase activities. May play a role in virion morphogenesis and viral RNA encapsidation by interacting with the capsid protein VP3. Its function is as follows. Localizes the viral replication complex to the surface of membranous vesicles. Together with protein 3CD binds the Cis-Active RNA Element (CRE) which is involved in RNA synthesis initiation. Acts as a cofactor to stimulate the activity of 3D polymerase, maybe through a nucleid acid chaperone activity. Localizes the viral replication complex to the surface of membranous vesicles. It inhibits host cell endoplasmic reticulum-to-Golgi apparatus transport and causes the disassembly of the Golgi complex, possibly through GBF1 interaction. This would result in depletion of MHC, trail receptors and IFN receptors at the host cell surface. Plays an essential role in viral RNA replication by recruiting ACBD3 and PI4KB at the viral replication sites, thereby allowing the formation of the rearranged membranous structures where viral replication takes place. Functionally, acts as a primer for viral RNA replication and remains covalently bound to viral genomic RNA. VPg is uridylylated prior to priming replication into VPg-pUpU. The oriI viral genomic sequence may act as a template for this. The VPg-pUpU is then used as primer on the genomic RNA poly(A) by the RNA-dependent RNA polymerase to replicate the viral genome. During genome replication, the VPg-RNA linkage is removed by the host TDP2, thereby accelerating replication. During the late stage of the replication cycle, host TDP2 is excluded from sites of viral RNA synthesis and encapsidation, allowing for the generation of progeny virions. In terms of biological role, involved in the viral replication complex and viral polypeptide maturation. It exhibits protease activity with a specificity and catalytic efficiency that is different from protease 3C. Protein 3CD lacks polymerase activity. Protein 3CD binds to the 5'UTR of the viral genome. Its function is as follows. Replicates the viral genomic RNA on the surface of intracellular membranes. May form linear arrays of subunits that propagate along a strong head-to-tail interaction called interface-I. Covalently attaches UMP to a tyrosine of VPg, which is used to prime RNA synthesis. The positive stranded RNA genome is first replicated at virus induced membranous vesicles, creating a dsRNA genomic replication form. This dsRNA is then used as template to synthesize positive stranded RNA genomes. ss(+)RNA genomes are either translated, replicated or encapsidated. Major viral protease that mediates proteolytic processing of the polyprotein. Cleaves host EIF5B, contributing to host translation shutoff. Also cleaves host PABPC1, contributing to host translation shutoff. Cleaves host NLRP1, triggers host N-glycine-mediated degradation of the autoinhibitory NLRP1 N-terminal fragment. The polypeptide is Genome polyprotein (Homo sapiens (Human)).